Here is a 258-residue protein sequence, read N- to C-terminus: Synaptosomal-associated protein 29 (258 aa).

The disordered stretch occupies residues 1-41 (MSAYPKSYNPFDDDGEDEGARPAPWRDARDLPDGPDAPADR). Basic and acidic residues predominate over residues 18–32 (EGARPAPWRDARDLP). A coiled-coil region spans residues 76 to 107 (ASSEELARQRGVLERTEKMVDKMDQDLKISQK). 3 positions are modified to phosphoserine: S77, S78, and S114. A phosphothreonine mark is found at T130 and T137. Positions 150 to 191 (ISTSKEQEAKYQASHPNLRKLDDTDPVPRGAGSAMSTDAYPK) are disordered. 5 positions are modified to phosphoserine: S163, S182, S185, S204, and S210. The t-SNARE coiled-coil homology domain maps to 196–258 (RAYHQKIDSN…KSTERKVRQL (63 aa)).

It belongs to the SNAP-25 family. In terms of assembly, forms a SNARE complex, composed of VAMP8, SNAP29 and STX17, involved in fusion of autophagosome with lysosome. Interacts with multiple syntaxins including STX6. Interacts with EIPR1. Interacts with STX17; this interaction is increased in the absence of TMEM39A. (Microbial infection) Interacts with Hantaan hantavirus nucleoprotein; this interaction prevents the breakdown of the viral glycoprotein N by virus-triggered autophagy. As to quaternary structure, (Microbial infection) The interaction with STX17 is decreased in presence of SARS coronavirus-2/SARS-CoV-2 ORF3A protein. Found in brain, heart, kidney, liver, lung, placenta, skeletal muscle, spleen and pancreas.

Its subcellular location is the cytoplasm. It localises to the golgi apparatus membrane. The protein resides in the cytoplasmic vesicle. It is found in the autophagosome membrane. The protein localises to the cell projection. Its subcellular location is the cilium membrane. SNAREs, soluble N-ethylmaleimide-sensitive factor-attachment protein receptors, are essential proteins for fusion of cellular membranes. SNAREs localized on opposing membranes assemble to form a trans-SNARE complex, an extended, parallel four alpha-helical bundle that drives membrane fusion. SNAP29 is a SNARE involved in autophagy through the direct control of autophagosome membrane fusion with the lysososome membrane. Also plays a role in ciliogenesis by regulating membrane fusions. The chain is Synaptosomal-associated protein 29 from Homo sapiens (Human).